Consider the following 256-residue polypeptide: Osteocalcin 2 (256 aa).

A signal peptide spans 1 to 18 (MKTLVLLSICALLSVCWS). A propeptide spanning residues 19-209 (MGAVEPEVVV…LASVLLRRRR (191 aa)) is cleaved from the precursor. A compositionally biased stretch (low complexity) spans 38 to 186 (AAPADPAAAA…SSSSSSSSES (149 aa)). Residues 38–193 (AAPADPAAAA…SESASDEAAK (156 aa)) form a disordered region. One can recognise a Gla domain in the interval 218–252 (PLQLESLREVCELNIACDEMAETAGIVAAYVAYYG). 4 residues coordinate Ca(2+): E222, E226, E229, and D235. 4-carboxyglutamate is present on residues E222, E226, and E229. Cysteines 228 and 234 form a disulfide. E236 bears the 4-carboxyglutamate mark.

Belongs to the osteocalcin/matrix Gla protein family. In terms of processing, gamma-carboxyglutamate residues are formed by vitamin K dependent carboxylation by GGCX. These residues are essential for the binding of calcium.

It is found in the secreted. Its function is as follows. The carboxylated form is one of the main organic components of the bone matrix, which constitutes 1-2% of the total bone protein. The carboxylated form binds strongly to apatite and calcium. The protein is Osteocalcin 2 of Diplodus sargus (White seabream).